We begin with the raw amino-acid sequence, 423 residues long: Serine--tRNA ligase (423 aa).

230 to 232 (TSE) serves as a coordination point for L-serine. ATP is bound at residue 261-263 (RSE). Position 284 (glutamate 284) interacts with L-serine. 348–351 (EISS) contributes to the ATP binding site. An L-serine-binding site is contributed by serine 384.

It belongs to the class-II aminoacyl-tRNA synthetase family. Type-1 seryl-tRNA synthetase subfamily. In terms of assembly, homodimer. The tRNA molecule binds across the dimer.

It localises to the cytoplasm. The enzyme catalyses tRNA(Ser) + L-serine + ATP = L-seryl-tRNA(Ser) + AMP + diphosphate + H(+). The catalysed reaction is tRNA(Sec) + L-serine + ATP = L-seryl-tRNA(Sec) + AMP + diphosphate + H(+). It participates in aminoacyl-tRNA biosynthesis; selenocysteinyl-tRNA(Sec) biosynthesis; L-seryl-tRNA(Sec) from L-serine and tRNA(Sec): step 1/1. Functionally, catalyzes the attachment of serine to tRNA(Ser). Is also able to aminoacylate tRNA(Sec) with serine, to form the misacylated tRNA L-seryl-tRNA(Sec), which will be further converted into selenocysteinyl-tRNA(Sec). In Macrococcus caseolyticus (strain JCSC5402) (Macrococcoides caseolyticum), this protein is Serine--tRNA ligase.